The following is a 268-amino-acid chain: Ribosomal RNA small subunit methyltransferase A (268 aa).

S-adenosyl-L-methionine is bound by residues N18, L20, G45, E66, D91, and N112.

This sequence belongs to the class I-like SAM-binding methyltransferase superfamily. rRNA adenine N(6)-methyltransferase family. RsmA subfamily.

Its subcellular location is the cytoplasm. It carries out the reaction adenosine(1518)/adenosine(1519) in 16S rRNA + 4 S-adenosyl-L-methionine = N(6)-dimethyladenosine(1518)/N(6)-dimethyladenosine(1519) in 16S rRNA + 4 S-adenosyl-L-homocysteine + 4 H(+). In terms of biological role, specifically dimethylates two adjacent adenosines (A1518 and A1519) in the loop of a conserved hairpin near the 3'-end of 16S rRNA in the 30S particle. May play a critical role in biogenesis of 30S subunits. This Shewanella baltica (strain OS185) protein is Ribosomal RNA small subunit methyltransferase A.